The sequence spans 492 residues: GDP-Man:Man(3)GlcNAc(2)-PP-Dol alpha-1,2-mannosyltransferase (492 aa).

Topologically, residues 1 to 19 are lumenal; that stretch reads MAAGERSWCLCKLLRFFYS. A helical transmembrane segment spans residues 20–40; it reads LFFPGLIVCGTLCVCLVIVLW. The Cytoplasmic segment spans residues 41 to 233; it reads GIRLLLQRKK…TRNPFLSKVK (193 aa). The segment at residues 234–254 is an intramembrane region (helical); that stretch reads LIYYYLFAFIYGLVGSCSDVV. Topologically, residues 255 to 399 are cytoplasmic; it reads MVNSSWTLNH…IGLHTMWNEH (145 aa). The helical intramembrane region spans 400–420; the sequence is FGIGVVECMAAGTIILAHNSG. The Cytoplasmic portion of the chain corresponds to 421–492; the sequence is GPKLDIVVPH…FLSSVEKLFK (72 aa).

Belongs to the glycosyltransferase group 1 family. Glycosyltransferase 4 subfamily.

Its subcellular location is the endoplasmic reticulum membrane. The catalysed reaction is an alpha-D-Man-(1-&gt;3)-[alpha-D-Man-(1-&gt;6)]-beta-D-Man-(1-&gt;4)-beta-D-GlcNAc-(1-&gt;4)-alpha-D-GlcNAc-diphospho-di-trans,poly-cis-dolichol + 2 GDP-alpha-D-mannose = an alpha-D-Man-(1-&gt;2)-alpha-D-Man-(1-&gt;2)-alpha-D-Man-(1-&gt;3)-[alpha-D-Man-(1-&gt;6)]-beta-D-Man-(1-&gt;4)-beta-D-GlcNAc-(1-&gt;4)-alpha-D-GlcNAc-diphospho-di-trans,poly-cis-dolichol + 2 GDP + 2 H(+). Its pathway is protein modification; protein glycosylation. Functionally, GDP-Man:Man(3)GlcNAc(2)-PP-Dol alpha-1,2-mannosyltransferase that operates in the biosynthetic pathway of dolichol-linked oligosaccharides, the glycan precursors employed in protein asparagine (N)-glycosylation. The assembly of dolichol-linked oligosaccharides begins on the cytosolic side of the endoplasmic reticulum membrane and finishes in its lumen. The sequential addition of sugars to dolichol pyrophosphate produces dolichol-linked oligosaccharides containing fourteen sugars, including two GlcNAcs, nine mannoses and three glucoses. Once assembled, the oligosaccharide is transferred from the lipid to nascent proteins by oligosaccharyltransferases. Catalyzes, on the cytoplasmic face of the endoplasmic reticulum, the addition of the fourth and fifth mannose residues to the dolichol-linked oligosaccharide chain, to produce Man(5)GlcNAc(2)-PP-dolichol core oligosaccharide. Man(5)GlcNAc(2)-PP-dolichol is a substrate for ALG3, the following enzyme in the biosynthetic pathway. This Homo sapiens (Human) protein is GDP-Man:Man(3)GlcNAc(2)-PP-Dol alpha-1,2-mannosyltransferase.